We begin with the raw amino-acid sequence, 715 residues long: MAPPPLPLFSPSLKAPPPPPWLHGSSTQSRDSAPPVPPLPAEATPSKFRIDSPKPAPARKNTKTAAKPLTAGVPGGRTHRAVLGIIRRVRSLELSDAPSPNSVHTSNSGAAAAAFHLTIELSPPREPGQYVVEKEKSRAVPWAAARDEGLKVALRREKKPREPTRAETELETHELRRLRRLARGIGRWARAKKAGVTDEVVKEVRREWASGEELAAVRIVEPLRRSMDRAREILEIKTGGLVVWTKGDMHFVYRGSKYQQNAKHSHTFLTNVHKDDAFQENDQSICGQKDEEPVKGTLYEREVNRLLDTLGPRFVDWWWDTPLPVDADLLPEFVPGSKTPYRLCPPGVRPTLADEELTYLRKLARLLPTHFALGRNTRLQGLAAAILKLWEKSLIAKIAVKIGIQNTNNEQMAWNLKHLTGGTVILRNKDFIILYRGKDFLPGGVAQTVIQREAQVHDEQVKEEEARLKAVDSLQMVGELSEESSLGTFREYQGFHAKFVHENTENSNTMIELEAEKYRLEKELKDHEWKLSVLNKKIERSNQALAKLHSSWSPSEQSADREHLTEEEKIMFRRIGRKMDGLVLLGRRGIFDGVIEEIHQHWKHKEVVKVITKQNQTRQIMYAASLLEVETGGILIAVEKLTTSHAIILYRGKNYRRPAKSSFSNLLTKREALRRSIEVQRRGSMKYFVRERQKSILELKRKLRYVTRQIRYRTP.

The segment covering 1 to 21 (MAPPPLPLFSPSLKAPPPPPW) has biased composition (pro residues). The transit peptide at 1–40 (MAPPPLPLFSPSLKAPPPPPWLHGSSTQSRDSAPPVPPLP) directs the protein to the chloroplast. A disordered region spans residues 1-76 (MAPPPLPLFS…KPLTAGVPGG (76 aa)). CRM domains are found at residues 168–265 (TELE…AKHS) and 350–447 (PTLA…GVAQ). 2 coiled-coil regions span residues 448-473 (TVIQ…AVDS) and 502-550 (ENTE…KLHS). The CRM 3 domain maps to 562-662 (EHLTEEEKIM…KNYRRPAKSS (101 aa)).

As to quaternary structure, homodimer. Interacts with RNA, specifically with atpF intron. Part of large ribonucleo-protein complexes that include group IIA introns and CRS1. More expressed in leaves than in roots.

It is found in the plastid. It localises to the chloroplast stroma. In terms of biological role, required for the splicing of group IIA introns in chloroplasts, and especially for atpF, by regulating the intron folding. Forms splicing particles with RNA. Also involved in chloroplast protein translation. The chain is Chloroplastic group IIA intron splicing facilitator CRS1, chloroplastic (CRS1) from Zea mays (Maize).